The following is a 550-amino-acid chain: Solute carrier family 22 member 6 (550 aa).

The Cytoplasmic segment spans residues 1–9 (MAFNDLLQQ). Residues 10 to 30 (VGGVGRFQQIQVTLVVLPLLL) traverse the membrane as a helical segment. The Extracellular segment spans residues 31–135 (MASHNTVQNF…LVCSHRALRQ (105 aa)). N-linked (GlcNAc...) asparagine glycans are attached at residues Asn-56, Asn-92, and Asn-113. Residues 136–156 (LAQSLYMVGVLLGAMVFGYLA) traverse the membrane as a helical segment. Topologically, residues 157–164 (DRLGRRKV) are cytoplasmic. Residues 165-187 (LILNYLQTAVSGTCAAFAPNFPI) traverse the membrane as a helical segment. At 188-190 (YCA) the chain is on the extracellular side. A helical transmembrane segment spans residues 191 to 213 (FRLLSGMSLAGIALNCMTLNVEW). Residues 214–224 (MPIHTRACVGT) are Cytoplasmic-facing. A helical membrane pass occupies residues 225–245 (LIGYVYSLGQFLLAGVAYAVP). The Extracellular portion of the chain corresponds to 246-248 (HWR). The helical transmembrane segment at 249 to 269 (HLQLLISVPFFAFFIYSWFFI) threads the bilayer. Over 270–337 (ESARWHSSSG…ELLRCPTLRH (68 aa)) the chain is Cytoplasmic. A helical membrane pass occupies residues 338–358 (LFLCLSMLWFATSFAYYGLVM). Topologically, residues 359–368 (DLQGFGVSIY) are extracellular. Residues 369–389 (LIQVIFGAVDLPAKLVGFLVI) traverse the membrane as a helical segment. The Cytoplasmic portion of the chain corresponds to 390–395 (NSLGRR). The chain crosses the membrane as a helical span at residues 396–416 (PAQMAALLLAGICILLNGVVP). Over 417–425 (QDQSVIRTS) the chain is Extracellular. The chain crosses the membrane as a helical span at residues 426–446 (LAVLGKGCLAASFNCIFLYTG). Residues 447-456 (ELYPTMIRQT) are Cytoplasmic-facing. A helical membrane pass occupies residues 457–477 (GLGMGSTMARVGSIVSPLVSM). Residues 478–484 (TTELYPS) are Extracellular-facing. Residues 485–505 (VPLFIYGAVPVAASAVTVLLP) form a helical membrane-spanning segment. Residues 506-550 (ETLGQPLPDTVQDLESRKGKQTPQQQEHQKYMVPLQASAQEKNGL) lie on the Cytoplasmic side of the membrane. The tract at residues 513 to 550 (PDTVQDLESRKGKQTPQQQEHQKYMVPLQASAQEKNGL) is disordered.

This sequence belongs to the major facilitator (TC 2.A.1) superfamily. Organic cation transporter (TC 2.A.1.19) family. Glycosylated. Glycosylation is necessary for proper targeting of the transporter to the plasma membrane. In terms of tissue distribution, expressed in kidney; in the basolateral membrane of the proximal tubule.

It localises to the basolateral cell membrane. The protein localises to the basal cell membrane. It carries out the reaction (6R)-L-erythro-5,6,7,8-tetrahydrobiopterin(out) + a dicarboxylate(in) = (6R)-L-erythro-5,6,7,8-tetrahydrobiopterin(in) + a dicarboxylate(out). The enzyme catalyses L-erythro-7,8-dihydrobiopterin(out) + a dicarboxylate(in) = L-erythro-7,8-dihydrobiopterin(in) + a dicarboxylate(out). The catalysed reaction is L-sepiapterin(out) + a dicarboxylate(in) = L-sepiapterin(in) + a dicarboxylate(out). It catalyses the reaction prostaglandin F2alpha(out) + a dicarboxylate(in) = prostaglandin F2alpha(in) + a dicarboxylate(out). It carries out the reaction prostaglandin E2(out) + a dicarboxylate(in) = prostaglandin E2(in) + a dicarboxylate(out). The enzyme catalyses 3',5'-cyclic AMP(out) + a dicarboxylate(in) = 3',5'-cyclic AMP(in) + a dicarboxylate(out). The catalysed reaction is 3',5'-cyclic GMP(out) + a dicarboxylate(in) = 3',5'-cyclic GMP(in) + a dicarboxylate(out). It catalyses the reaction urate(out) + a dicarboxylate(in) = urate(in) + a dicarboxylate(out). It carries out the reaction kynurenate(out) + glutarate(in) = kynurenate(in) + glutarate(out). The enzyme catalyses (indol-3-yl)acetate(out) + a dicarboxylate(in) = (indol-3-yl)acetate(in) + a dicarboxylate(out). The catalysed reaction is indoxyl sulfate(out) + a dicarboxylate(in) = indoxyl sulfate(in) + a dicarboxylate(out). It catalyses the reaction N-benzoylglycine(out) + a dicarboxylate(in) = N-benzoylglycine(in) + a dicarboxylate(out). It carries out the reaction 3-carboxy-4-methyl-5-propyl-2-furanpropanoate(out) + a dicarboxylate(in) = 3-carboxy-4-methyl-5-propyl-2-furanpropanoate(in) + a dicarboxylate(out). Secondary active transporter that functions as a Na(+)-independent organic anion (OA)/dicarboxylate antiporter where the uptake of one molecule of OA into the cell is coupled with an efflux of one molecule of intracellular dicarboxylate such as 2-oxoglutarate or glutarate. Mediates the uptake of OA across the basolateral side of proximal tubule epithelial cells, thereby contributing to the renal elimination of endogenous OA from the systemic circulation into the urine. Functions as a biopterin transporters involved in the uptake and the secretion of coenzymes tetrahydrobiopterin (BH4), dihydrobiopterin (BH2) and sepiapterin to urine, thereby determining baseline levels of blood biopterins. Transports prostaglandin E2 (PGE2) and prostaglandin F2-alpha (PGF2-alpha) and may contribute to their renal excretion. Also mediates the uptake of cyclic nucleotides such as cAMP and cGMP. Involved in the transport of neuroactive tryptophan metabolites kynurenate (KYNA) and xanthurenate (XA) and may contribute to their secretion from the brain. May transport glutamate. Also involved in the disposition of uremic toxins and potentially toxic xenobiotics by the renal organic anion secretory pathway, helping reduce their undesired toxicological effects on the body. Uremic toxins include the indoxyl sulfate (IS), hippurate/N-benzoylglycine (HA), indole acetate (IA), 3-carboxy-4- methyl-5-propyl-2-furanpropionate (CMPF) and urate. Xenobiotics include the mycotoxin ochratoxin (OTA). May also contribute to the transport of organic compounds in testes across the blood-testis-barrier. The chain is Solute carrier family 22 member 6 from Macaca fascicularis (Crab-eating macaque).